An 801-amino-acid polypeptide reads, in one-letter code: Protocadherin beta-8 (801 aa).

The N-terminal stretch at 1 to 29 (MEASGKLICRQRQVLFSFLLLGLSLAGAA) is a signal peptide. Topologically, residues 30 to 691 (EPRSYSVVEE…GQADSLTVYL (662 aa)) are extracellular. 5 Cadherin domains span residues 36 to 134 (VVEE…SPVF), 139 to 243 (MLVK…APEF), 248 to 348 (YRVQ…APEV), 353 to 452 (FTSP…APAF), and 457 to 562 (YTLF…SPFV). Cysteine 97 and cysteine 103 are joined by a disulfide. Residues asparagine 419 and asparagine 437 are each glycosylated (N-linked (GlcNAc...) asparagine). Residue asparagine 568 is glycosylated (N-linked (GlcNAc...) asparagine). The 104-residue stretch at 569–672 (SSAPCTELVP…LVDGFSQPYL (104 aa)) folds into the Cadherin 6 domain. A helical transmembrane segment spans residues 692 to 710 (VVALASVSSLFLFSVLLFV). Residues 711-801 (AVRLCRRSRA…NGFGFSLQLK (91 aa)) lie on the Cytoplasmic side of the membrane.

As to quaternary structure, forms homodimers in trans (molecules expressed by two different cells). Forms promiscuous heterodimers in cis (at the plasma membrane of the same cell) with other protocadherins.

The protein resides in the cell membrane. Calcium-dependent cell-adhesion protein involved in cells self-recognition and non-self discrimination. Thereby, it is involved in the establishment and maintenance of specific neuronal connections in the brain. The polypeptide is Protocadherin beta-8 (Pan troglodytes (Chimpanzee)).